Reading from the N-terminus, the 855-residue chain is Oxysterol-binding protein-related protein 3 (855 aa).

The disordered stretch occupies residues 1 to 32 (MSDEKNLGVSQKLVSPSRSTSSCSSKQGSRQD). Phosphoserine occurs at positions 15 and 33. The segment covering 15–31 (SPSRSTSSCSSKQGSRQ) has biased composition (low complexity). The 96-residue stretch at 50–145 (PPVQKGFLLK…WVSKLRHHRM (96 aa)) folds into the PH domain. The short motif at 161 to 167 (FFSGSSV) is the FFAT 1 element. Serine 199, serine 250, serine 272, serine 277, serine 288, serine 291, serine 340, serine 393, serine 405, and serine 408 each carry phosphoserine. Residues 274–293 (PNLSTLDFGEEKSYSDGSEA) form a disordered region. Positions 377 to 396 (DPPAVPKPGDNLAEENSRDE) are disordered. Positions 450-454 (LSLDN) match the FFAT 2 motif. Residues 468-490 (PVLESSGEARSKRRTSLPAPGPN) form a disordered region.

This sequence belongs to the OSBP family. Homodimer. Interacts with RRAS. Interacts (phosphorylated form) with VAPA. Interacts with OSBPL6. Post-translationally, phosphorylation is enhanced in vitro by phorbol-12-myristate-13-acetate (PMA), forskolin and calcium ionophore A23187. Phosphorylation seems to be stimulated in conditions of low cell-cell (or cell-matrix) adhesion. Expressed in spinal ganglia. Expressed in a subset of small lymphocytes (at protein level).

The protein resides in the endoplasmic reticulum membrane. The protein localises to the cytoplasm. It localises to the cytosol. Its subcellular location is the cell membrane. It is found in the cell projection. The protein resides in the filopodium tip. The protein localises to the nucleus membrane. Its function is as follows. Phosphoinositide-binding protein which associates with both cell and endoplasmic reticulum (ER) membranes. Can bind to the ER membrane protein VAPA and recruit VAPA to plasma membrane sites, thus linking these intracellular compartments. The ORP3-VAPA complex stimulates RRAS signaling which in turn attenuates integrin beta-1 (ITGB1) activation at the cell surface. With VAPA, may regulate ER morphology. Has a role in regulation of the actin cytoskeleton, cell polarity and cell adhesion. Binds to phosphoinositides with preference for PI(3,4)P2 and PI(3,4,5)P3. Also binds 25-hydroxycholesterol and cholesterol. This chain is Oxysterol-binding protein-related protein 3 (Osbpl3), found in Mus musculus (Mouse).